The sequence spans 161 residues: Allophycocyanin beta chain (161 aa).

N4-methylasparagine is present on N71. Residue C81 coordinates (2R,3E)-phycocyanobilin.

This sequence belongs to the phycobiliprotein family. Heterodimer of an alpha and a beta chain. Post-translationally, contains one covalently linked phycocyanobilin chromophore.

The protein resides in the plastid. It localises to the cyanelle thylakoid membrane. Functionally, light-harvesting photosynthetic bile pigment-protein from the phycobiliprotein complex. Allophycocyanin has a maximum absorption at approximately 650 nanometers. This chain is Allophycocyanin beta chain (apcB), found in Cyanophora paradoxa.